We begin with the raw amino-acid sequence, 888 residues long: MASNIFSRIKSPSGGSQSFYQQLRSGEDPEYDPGLDEENLGHRFDDFQAEGMDIGDSSMTVESVAPGSKGKGKATFRPTAHARSSGITSPRWQQDDDGDNEVPASLLMEPKDLDPPASPPNKRATNPGSSRTPASVGPSSARTRAQWEAATAQQQLHQDHPYTTPMGPQPIPVARGTMSNNPREKALWRWVNTSNLDSFMRDVYDYFEGGGLWCILCANALWLFQCIDYSRVPDSRSLHEVIVPQCTRKMSGLWNFAIWLYTFFFIWKCVQYFVEIRRLTYIRDFYIYLLDIPEQDMQTISWQDVVARIMALREENPKTATNISPRLRQFMGSQSKERLDALDIANRLMRKENYLIAMINKDILDLSLPVPFLRGRQMFSKTMEWYLQYCILDMAFNELGQVQQDFLRPDRRRLLSQKLRQRFLFAGFLNLLFAPVVLAYVVIVYFFTYYYEYQKDPKQAAARKYTSLAEWKFRQFNELPHIFYERLHMSYPFATRYIDQFPKRITEAVARTIAFMSGAITAILAIGSVLDSELFLNFEITKDRPVIFYLGVFAAIWATTRGMVSEETLVFNPEYALRNVIEYTRYVPDHWKNKLHSSEVKQEFSELYKMKVVIFLEEMMGIVTTPMLLLFSLPRCSDQIVDFFREFTIHVDGLGYVCSFAVFDFQKGPGNTGPQGPRPDVREDYYSTKHGKMAASYYGFLDNYAANPKTGIPGHLPPGPKPSFHPPPSFPGIGSPTLAADMQGSHIGRTGTETGRARSRAPGGRGPRIGVMPQPSPMASMLLDQHHQPPGGNMVARSLHASRYPRGYRGESQIIEETEASSIRRNGEDDELYEPGGALGESVWETSPARGVTRENSAANTEDPEAGVLGLIYQLQQTQRPRRGGGMV.

Residues 1–170 (MASNIFSRIK…PYTTPMGPQP (170 aa)) are disordered. Topologically, residues 1-255 (MASNIFSRIK…CTRKMSGLWN (255 aa)) are cytoplasmic. The span at 13-24 (SGGSQSFYQQLR) shows a compositional bias: polar residues. Positions 28 to 38 (DPEYDPGLDEE) are enriched in acidic residues. Residues 123-143 (RATNPGSSRTPASVGPSSART) show a composition bias toward polar residues. A helical membrane pass occupies residues 256 to 276 (FAIWLYTFFFIWKCVQYFVEI). At 277–422 (RRLTYIRDFY…RLLSQKLRQR (146 aa)) the chain is on the lumenal side. A helical membrane pass occupies residues 423 to 443 (FLFAGFLNLLFAPVVLAYVVI). Topologically, residues 444–511 (VYFFTYYYEY…PKRITEAVAR (68 aa)) are cytoplasmic. An intramembrane segment occupies 512 to 532 (TIAFMSGAITAILAIGSVLDS). The Cytoplasmic portion of the chain corresponds to 533 to 544 (ELFLNFEITKDR). The helical transmembrane segment at 545 to 565 (PVIFYLGVFAAIWATTRGMVS) threads the bilayer. The Lumenal portion of the chain corresponds to 566 to 611 (EETLVFNPEYALRNVIEYTRYVPDHWKNKLHSSEVKQEFSELYKMK). The chain crosses the membrane as a helical span at residues 612 to 632 (VVIFLEEMMGIVTTPMLLLFS). At 633–642 (LPRCSDQIVD) the chain is on the cytoplasmic side. An intramembrane segment occupies 643-663 (FFREFTIHVDGLGYVCSFAVF). Residues 664–888 (DFQKGPGNTG…QRPRRGGGMV (225 aa)) lie on the Cytoplasmic side of the membrane. Disordered regions lie at residues 748–770 (GRTGTETGRARSRAPGGRGPRIG) and 834–866 (EPGGALGESVWETSPARGVTRENSAANTEDPEA).

This sequence belongs to the ATG9 family. In terms of assembly, homotrimer; forms a homotrimer with a central pore that forms a path between the two membrane leaflets. In terms of processing, phosphorylated by ATG1. ATG1 phosphorylation is required for ATG18 interaction and preautophagosome elongation.

Its subcellular location is the preautophagosomal structure membrane. The protein localises to the cytoplasmic vesicle membrane. It is found in the golgi apparatus membrane. The protein resides in the endoplasmic reticulum membrane. The catalysed reaction is a 1,2-diacyl-sn-glycero-3-phosphocholine(in) = a 1,2-diacyl-sn-glycero-3-phosphocholine(out). The enzyme catalyses a 1,2-diacyl-sn-glycero-3-phospho-L-serine(in) = a 1,2-diacyl-sn-glycero-3-phospho-L-serine(out). It carries out the reaction a 1,2-diacyl-sn-glycero-3-phosphoethanolamine(in) = a 1,2-diacyl-sn-glycero-3-phosphoethanolamine(out). It catalyses the reaction a 1,2-diacyl-sn-glycero-3-phospho-(1D-myo-inositol-3-phosphate)(in) = a 1,2-diacyl-sn-glycero-3-phospho-(1D-myo-inositol-3-phosphate)(out). Phospholipid scramblase involved in autophagy and cytoplasm to vacuole transport (Cvt) vesicle formation. Cycles between the preautophagosomal structure/phagophore assembly site (PAS) and the cytoplasmic vesicle pool and supplies membrane for the growing autophagosome. Lipid scramblase activity plays a key role in preautophagosomal structure/phagophore assembly by distributing the phospholipids that arrive through ATG2 from the cytoplasmic to the luminal leaflet of the bilayer, thereby driving autophagosomal membrane expansion. Required for mitophagy. Also involved in endoplasmic reticulum-specific autophagic process and is essential for the survival of cells subjected to severe ER stress. Different machineries are required for anterograde trafficking to the PAS during either the Cvt pathway or bulk autophagy and for retrograde trafficking. Autophagy is required for proper vegetative growth, asexual/sexual reproduction, and full virulence. Autophagy is particularly involved in the biosynthesis of deoxynivalenol (DON), an important virulence determinant. Required for aerial hyphae development and lipid droplet degradation in response to starvation. This is Autophagy-related protein 9 from Gibberella zeae (strain ATCC MYA-4620 / CBS 123657 / FGSC 9075 / NRRL 31084 / PH-1) (Wheat head blight fungus).